The sequence spans 552 residues: Glutamine-dependent NAD(+) synthetase (552 aa).

The region spanning 11-253 is the CN hydrolase domain; it reads LRIAMAQFDF…DQWLVVDYAA (243 aa). Residue E52 is the Proton acceptor; for glutaminase activity of the active site. The active-site For glutaminase activity is K119. An L-glutamine-binding site is contributed by Y125. The active-site Nucleophile; for glutaminase activity is the C157. L-glutamine is bound by residues S183 and K189. The interval 275–552 is ligase; it reads AWRAVVRGLK…YPITNGYSGQ (278 aa). 298–305 is an ATP binding site; the sequence is GLSGGIDS. Deamido-NAD(+) is bound at residue N381. T405 serves as a coordination point for ATP. Deamido-NAD(+) contacts are provided by E410 and K522.

In the C-terminal section; belongs to the NAD synthetase family.

The catalysed reaction is deamido-NAD(+) + L-glutamine + ATP + H2O = L-glutamate + AMP + diphosphate + NAD(+) + H(+). The protein operates within cofactor biosynthesis; NAD(+) biosynthesis; NAD(+) from deamido-NAD(+) (L-Gln route): step 1/1. Its function is as follows. Catalyzes the ATP-dependent amidation of deamido-NAD to form NAD. Uses L-glutamine as a nitrogen source. This chain is Glutamine-dependent NAD(+) synthetase, found in Xanthomonas campestris pv. campestris (strain 8004).